The primary structure comprises 415 residues: Multidrug resistance protein MdtA (415 aa).

The first 21 residues, 1 to 21, serve as a signal peptide directing secretion; the sequence is MKGSYKSRWVIVIVVVIAAIA. 2 disordered regions span residues 32–60 and 392–415; these read SRSAAPGATKQAQQSPASGRRGMRSGPLA and EAQSATTPEEKATSREYAKKGARS. Residues 399 to 415 are compositionally biased toward basic and acidic residues; the sequence is PEEKATSREYAKKGARS.

Belongs to the membrane fusion protein (MFP) (TC 8.A.1) family. Part of a tripartite efflux system composed of MdtA, MdtB and MdtC.

It localises to the cell inner membrane. In terms of biological role, the MdtABC tripartite complex confers resistance against novobiocin and deoxycholate. The polypeptide is Multidrug resistance protein MdtA (Escherichia coli O81 (strain ED1a)).